Reading from the N-terminus, the 338-residue chain is Lipoyl synthase (338 aa).

The interval methionine 1–lysine 24 is disordered. [4Fe-4S] cluster is bound by residues cysteine 84, cysteine 89, cysteine 95, cysteine 110, cysteine 114, cysteine 117, and serine 324. One can recognise a Radical SAM core domain in the interval phenylalanine 96–lysine 313.

This sequence belongs to the radical SAM superfamily. Lipoyl synthase family. [4Fe-4S] cluster serves as cofactor.

Its subcellular location is the cytoplasm. The catalysed reaction is [[Fe-S] cluster scaffold protein carrying a second [4Fe-4S](2+) cluster] + N(6)-octanoyl-L-lysyl-[protein] + 2 oxidized [2Fe-2S]-[ferredoxin] + 2 S-adenosyl-L-methionine + 4 H(+) = [[Fe-S] cluster scaffold protein] + N(6)-[(R)-dihydrolipoyl]-L-lysyl-[protein] + 4 Fe(3+) + 2 hydrogen sulfide + 2 5'-deoxyadenosine + 2 L-methionine + 2 reduced [2Fe-2S]-[ferredoxin]. Its pathway is protein modification; protein lipoylation via endogenous pathway; protein N(6)-(lipoyl)lysine from octanoyl-[acyl-carrier-protein]: step 2/2. Catalyzes the radical-mediated insertion of two sulfur atoms into the C-6 and C-8 positions of the octanoyl moiety bound to the lipoyl domains of lipoate-dependent enzymes, thereby converting the octanoylated domains into lipoylated derivatives. The polypeptide is Lipoyl synthase (Pseudomonas putida (strain W619)).